The following is a 142-amino-acid chain: MTRVDFYVIPSADPSARLQVACRLAEKAWRQGMQVYLHCADEAQRSELDGRLWSFRGEAFIPHSLAEEDAEAPVALGLGEPPGNHRDLLINLTLEAPGFVPNFSRVAELVVEEPAIRQAARDKFRFYREQGYPLQDHRLPRI.

Belongs to the DNA polymerase III chi/HolC chain family. DNA polymerase III contains a core (composed of alpha, epsilon and theta chains) that associates with a tau subunit. This core dimerizes to form the POLIII' complex. PolIII' associates with the gamma complex (composed of gamma, delta, delta', psi and chi chains) and with the beta chain to form the complete DNA polymerase III complex. Interacts directly with the psi subunit (holD). The only subunit of the DNA polymerase III holoenzyme known to interact with single-stranded DNA binding protein (SSB).

It carries out the reaction DNA(n) + a 2'-deoxyribonucleoside 5'-triphosphate = DNA(n+1) + diphosphate. Functionally, part of the beta sliding clamp loading complex, which hydrolyzes ATP to load the beta clamp onto primed DNA to form the DNA replication pre-initiation complex. DNA polymerase III is a complex, multichain enzyme responsible for most of the replicative synthesis in bacteria. This DNA polymerase also exhibits 3' to 5' exonuclease activity. The sequence is that of DNA polymerase III subunit chi from Pseudomonas aeruginosa (strain ATCC 15692 / DSM 22644 / CIP 104116 / JCM 14847 / LMG 12228 / 1C / PRS 101 / PAO1).